The primary structure comprises 273 residues: Peptide deformylase 1B, chloroplastic/mitochondrial (273 aa).

A chloroplast and mitochondrion-targeting transit peptide spans Met-1–Arg-56. Residues Cys-171 and His-213 each coordinate Fe cation. Residue Glu-214 is part of the active site. His-217 lines the Fe cation pocket. The segment covering Tyr-246–Arg-261 has biased composition (basic and acidic residues). The interval Tyr-246 to Arg-273 is disordered. Basic residues predominate over residues Gln-262–Arg-273.

This sequence belongs to the polypeptide deformylase family. In terms of assembly, homodimer. Fe(2+) serves as cofactor. As to expression, expressed in leaves and flowers.

Its subcellular location is the plastid. The protein localises to the chloroplast stroma. It is found in the mitochondrion. It catalyses the reaction N-terminal N-formyl-L-methionyl-[peptide] + H2O = N-terminal L-methionyl-[peptide] + formate. Its activity is regulated as follows. Inhibited by actinonin. Its function is as follows. Removes the formyl group from the N-terminal Met of newly synthesized proteins. Has a preferred substrate specificity towards the photosystem II (PS II) D1 polypeptide. In Arabidopsis thaliana (Mouse-ear cress), this protein is Peptide deformylase 1B, chloroplastic/mitochondrial (PDF1B).